The following is a 296-amino-acid chain: Protease HtpX homolog (296 aa).

A run of 2 helical transmembrane segments spans residues 14 to 34 (VFLL…VGYL) and 38 to 58 (SLVT…VIMI). His-144 provides a ligand contact to Zn(2+). The active site involves Glu-145. His-148 lines the Zn(2+) pocket. Helical transmembrane passes span 159–179 (IALA…NWWL) and 198–218 (LLVF…AAVI). Glu-227 provides a ligand contact to Zn(2+).

Belongs to the peptidase M48B family. Requires Zn(2+) as cofactor.

The protein resides in the cell membrane. This Leuconostoc citreum (strain KM20) protein is Protease HtpX homolog.